The sequence spans 100 residues: Urease subunit gamma (100 aa).

It belongs to the urease gamma subunit family. As to quaternary structure, heterotrimer of UreA (gamma), UreB (beta) and UreC (alpha) subunits. Three heterotrimers associate to form the active enzyme.

The protein localises to the cytoplasm. The enzyme catalyses urea + 2 H2O + H(+) = hydrogencarbonate + 2 NH4(+). It functions in the pathway nitrogen metabolism; urea degradation; CO(2) and NH(3) from urea (urease route): step 1/1. In Alkalilimnicola ehrlichii (strain ATCC BAA-1101 / DSM 17681 / MLHE-1), this protein is Urease subunit gamma.